The following is a 417-amino-acid chain: UPF0754 membrane protein PCC8801_0398 (417 aa).

2 helical membrane-spanning segments follow: residues Phe11–Thr31 and Ile395–Ile415.

This sequence belongs to the UPF0754 family.

It is found in the cell inner membrane. The polypeptide is UPF0754 membrane protein PCC8801_0398 (Rippkaea orientalis (strain PCC 8801 / RF-1) (Cyanothece sp. (strain PCC 8801))).